We begin with the raw amino-acid sequence, 148 residues long: Large ribosomal subunit protein bL9 (148 aa).

Belongs to the bacterial ribosomal protein bL9 family.

Its function is as follows. Binds to the 23S rRNA. This Marinobacter nauticus (strain ATCC 700491 / DSM 11845 / VT8) (Marinobacter aquaeolei) protein is Large ribosomal subunit protein bL9.